The chain runs to 296 residues: 4-hydroxybenzoate octaprenyltransferase (296 aa).

Transmembrane regions (helical) follow at residues 28–48 (IGTLLLLWPTYWALWLASDGI), 51–71 (LAVLAAFTIGTFLMRSAGCVI), 102–122 (LLLTAFLCLLAALCLIPLNHL), 143–163 (FFPIPQLYLGLAFSFGIPMAF), 174–194 (AWILFAANVLWTLAYDTVYAM), 212–232 (FGRYDIAAVMLCHGGFTLLMA), 233–253 (VLGAVIGAAWAYWTAIPIVLL), and 274–294 (FLANNRIGWVWFTAIFAHTFF).

It belongs to the UbiA prenyltransferase family. The cofactor is Mg(2+).

It is found in the cell inner membrane. The catalysed reaction is all-trans-octaprenyl diphosphate + 4-hydroxybenzoate = 4-hydroxy-3-(all-trans-octaprenyl)benzoate + diphosphate. It participates in cofactor biosynthesis; ubiquinone biosynthesis. Its function is as follows. Catalyzes the prenylation of para-hydroxybenzoate (PHB) with an all-trans polyprenyl group. Mediates the second step in the final reaction sequence of ubiquinone-8 (UQ-8) biosynthesis, which is the condensation of the polyisoprenoid side chain with PHB, generating the first membrane-bound Q intermediate 3-octaprenyl-4-hydroxybenzoate. The chain is 4-hydroxybenzoate octaprenyltransferase from Neisseria meningitidis serogroup B (strain ATCC BAA-335 / MC58).